Reading from the N-terminus, the 142-residue chain is 3-hydroxyacyl-[acyl-carrier-protein] dehydratase FabZ (142 aa).

His48 is a catalytic residue.

It belongs to the thioester dehydratase family. FabZ subfamily.

It localises to the cytoplasm. It catalyses the reaction a (3R)-hydroxyacyl-[ACP] = a (2E)-enoyl-[ACP] + H2O. Functionally, involved in unsaturated fatty acids biosynthesis. Catalyzes the dehydration of short chain beta-hydroxyacyl-ACPs and long chain saturated and unsaturated beta-hydroxyacyl-ACPs. The polypeptide is 3-hydroxyacyl-[acyl-carrier-protein] dehydratase FabZ (Clostridioides difficile (strain 630) (Peptoclostridium difficile)).